The following is a 78-amino-acid chain: Acyl carrier protein (78 aa).

Positions 2–77 (STIEERVKKI…AAIDYVTSHQ (76 aa)) constitute a Carrier domain. Serine 37 carries the post-translational modification O-(pantetheine 4'-phosphoryl)serine.

This sequence belongs to the acyl carrier protein (ACP) family. In terms of processing, 4'-phosphopantetheine is transferred from CoA to a specific serine of apo-ACP by AcpS. This modification is essential for activity because fatty acids are bound in thioester linkage to the sulfhydryl of the prosthetic group.

It is found in the cytoplasm. It participates in lipid metabolism; fatty acid biosynthesis. Functionally, carrier of the growing fatty acid chain in fatty acid biosynthesis. This chain is Acyl carrier protein, found in Pseudomonas fluorescens (strain SBW25).